The primary structure comprises 584 residues: ATP-dependent lipid A-core flippase (584 aa).

5 helical membrane passes run 18-38 (LWPI…TLIL), 65-85 (VFVW…FSGF), 155-175 (IIGL…ILVL), 252-272 (IFDP…LYAA), and 277-297 (VMEM…IVLM). One can recognise an ABC transmembrane type-1 domain in the interval 30-312 (VVASITLILN…LTNVSAQFQR (283 aa)). Positions 344–580 (IIFDDVTFFY…QGIYAQLYKL (237 aa)) constitute an ABC transporter domain. 378-385 (GRSGSGKS) provides a ligand contact to ATP.

It belongs to the ABC transporter superfamily. Lipid exporter (TC 3.A.1.106) family. Homodimer.

Its subcellular location is the cell inner membrane. The enzyme catalyses ATP + H2O + lipid A-core oligosaccharideSide 1 = ADP + phosphate + lipid A-core oligosaccharideSide 2.. Involved in lipopolysaccharide (LPS) biosynthesis. Translocates lipid A-core from the inner to the outer leaflet of the inner membrane. Transmembrane domains (TMD) form a pore in the inner membrane and the ATP-binding domain (NBD) is responsible for energy generation. The sequence is that of ATP-dependent lipid A-core flippase from Blochmanniella pennsylvanica (strain BPEN).